Consider the following 111-residue polypeptide: Vacuolar ATPase assembly integral membrane protein VMA21 (111 aa).

Topologically, residues 1–39 (MATRRIVATEKSILEKDDHIGSSPAAGEKSNITPAVPLD) are cytoplasmic. A helical membrane pass occupies residues 40-60 (VILKLLAFTLAMVVIPIGSYF). Over 61-73 (VTVNSIFKGNSTY) the chain is Lumenal. The helical transmembrane segment at 74 to 94 (AGALAAIMANVVLVAYVVVAM) threads the bilayer. Over 95-111 (NEDQTEQEKAKEGKKDR) the chain is Cytoplasmic. Residues 108-111 (KKDR) carry the Prevents secretion from ER motif.

This sequence belongs to the VMA21 family.

It localises to the endoplasmic reticulum membrane. The protein localises to the endoplasmic reticulum-Golgi intermediate compartment membrane. Its subcellular location is the cytoplasmic vesicle. The protein resides in the COPII-coated vesicle membrane. Required for the assembly of the V0 complex of the vacuolar ATPase (V-ATPase) in the endoplasmic reticulum. This is Vacuolar ATPase assembly integral membrane protein VMA21 from Pyricularia oryzae (strain 70-15 / ATCC MYA-4617 / FGSC 8958) (Rice blast fungus).